We begin with the raw amino-acid sequence, 339 residues long: Serine/arginine-rich splicing factor 6 (339 aa).

Residues 2–72 enclose the RRM 1 domain; that stretch reads PRVYIGRLSY…ERVIVEHARG (71 aa). 3 positions are modified to phosphoserine: Ser-45, Ser-81, and Ser-84. The tract at residues 75 to 103 is disordered; that stretch reads RDRDGYSYGSRSGGGGYSSRRTSGRDKYG. Positions 110–183 constitute an RRM 2 domain; it reads YRLIVENLSS…RNIRLIEDKP (74 aa). An N6-acetyllysine modification is found at Lys-165. A disordered region spans residues 176–339; the sequence is IRLIEDKPRT…RSRSRSSSRD (164 aa). Lys-182 participates in a covalent cross-link: Glycyl lysine isopeptide (Lys-Gly) (interchain with G-Cter in SUMO2). Residues 185-250 are compositionally biased toward basic residues; that stretch reads TSHRRSYSGS…RKSRSKSKSK (66 aa). The segment covering 280-291 has biased composition (basic and acidic residues); sequence SPKENGKGDIKS. Phosphoserine occurs at positions 297 and 299. Ser-303 carries the post-translational modification Phosphoserine; by DYRK1A. A phosphoserine mark is found at Ser-314 and Ser-316. Over residues 321 to 339 the composition is skewed to basic residues; that stretch reads RASRSRSRSRSRSRSSSRD.

The protein belongs to the splicing factor SR family. Binds SREK1/SFRS12. Interacts with DYRK1A. Interacts with RBMY; the interaction inhibits SRSF6 pre-mRNA splicing. In terms of processing, extensively phosphorylated on serine residues in the RS domain. Phosphorylated by DYRK1A, probably in the RS domain. Phosphorylation by DYRK1A modulates alternative splice site selection and inhibits the expression of MAPT/Tau exon 10.

The protein resides in the nucleus. The protein localises to the nucleus speckle. Its function is as follows. Plays a role in constitutive splicing and modulates the selection of alternative splice sites. Plays a role in the alternative splicing of MAPT/Tau exon 10. Binds to alternative exons of TNC pre-mRNA and promotes the expression of alternatively spliced TNC. Plays a role in wound healing and in the regulation of keratinocyte differentiation and proliferation via its role in alternative splicing. The sequence is that of Serine/arginine-rich splicing factor 6 (Srsf6) from Mus musculus (Mouse).